The following is a 358-amino-acid chain: Glutamine synthetase (358 aa).

The GS beta-grasp domain maps to 25–104 (VQAEYIWIDA…VLCECYDNDG (80 aa)). Residues 111–358 (YRAHCKKVMD…ILVETTVLNN (248 aa)) enclose the GS catalytic domain.

Belongs to the glutamine synthetase family. As to quaternary structure, homooctamer.

Its subcellular location is the cytoplasm. The enzyme catalyses L-glutamate + NH4(+) + ATP = L-glutamine + ADP + phosphate + H(+). This Cryptococcus neoformans var. neoformans serotype D (strain B-3501A) (Filobasidiella neoformans) protein is Glutamine synthetase (GLN1).